The chain runs to 437 residues: Probable carboxypeptidase HCBG_00059 (437 aa).

The first 20 residues, 1-20, serve as a signal peptide directing secretion; that stretch reads MKLSNLAALLSASTVAPVAA. An N-linked (GlcNAc...) asparagine glycan is attached at N153. D163 contacts Zn(2+). E195 (proton acceptor) is an active-site residue. Residue E196 participates in Zn(2+) binding. N346 carries an N-linked (GlcNAc...) asparagine glycan.

This sequence belongs to the peptidase M20A family. The cofactor is Zn(2+).

The protein localises to the secreted. The polypeptide is Probable carboxypeptidase HCBG_00059 (Ajellomyces capsulatus (strain G186AR / H82 / ATCC MYA-2454 / RMSCC 2432) (Darling's disease fungus)).